The chain runs to 191 residues: 3-isopropylmalate dehydratase small subunit (191 aa).

Belongs to the LeuD family. LeuD type 1 subfamily. In terms of assembly, heterodimer of LeuC and LeuD.

It carries out the reaction (2R,3S)-3-isopropylmalate = (2S)-2-isopropylmalate. It participates in amino-acid biosynthesis; L-leucine biosynthesis; L-leucine from 3-methyl-2-oxobutanoate: step 2/4. In terms of biological role, catalyzes the isomerization between 2-isopropylmalate and 3-isopropylmalate, via the formation of 2-isopropylmaleate. The polypeptide is 3-isopropylmalate dehydratase small subunit (Lactococcus lactis subsp. cremoris (strain MG1363)).